Consider the following 619-residue polypeptide: Mitochondrial Rho GTPase 1 (619 aa).

Residues 1–593 lie on the Cytoplasmic side of the membrane; sequence MKKDVRILLV…TQADLKSSTF (593 aa). A Miro 1 domain is found at 2–168; the sequence is KKDVRILLVG…FYYAQKAVLH (167 aa). GTP is bound by residues Arg-14, Gly-16, Lys-17, Thr-18, and Ser-19. Residue Thr-18 coordinates Mg(2+). 2 residues coordinate Mg(2+): Pro-35 and Asp-57. The GTP site is built by Ser-59, Asn-118, Lys-119, Asp-121, Ala-149, and Lys-150. 2 consecutive EF-hand domains span residues 184–219 and 304–339; these read ACIK…CFNT and HAYL…FPYM. Positions 197, 199, 201, 203, 208, 317, 319, 321, 323, and 328 each coordinate Ca(2+). In terms of domain architecture, Miro 2 spans 417–580; that stretch reads RNVFRCNVVG…FVKLTTMAMY (164 aa). The GTP site is built by Gly-429, Cys-430, Gly-431, Lys-432, Ser-433, Gly-434, Arg-448, Lys-529, Asp-531, Thr-559, and Cys-560. Mg(2+) is bound at residue Gly-429. A helical; Anchor for type IV membrane protein transmembrane segment spans residues 594–616; that stretch reads WLRASFGATVFAFLGFAMYKALI. Topologically, residues 617 to 619 are mitochondrial intermembrane; sequence KQR.

Belongs to the mitochondrial Rho GTPase family. Homodimer.

Its subcellular location is the mitochondrion outer membrane. The catalysed reaction is GTP + H2O = GDP + phosphate + H(+). It carries out the reaction ATP + H2O = ADP + phosphate + H(+). The enzyme catalyses UTP + H2O = UDP + phosphate + H(+). Functionally, atypical mitochondrial nucleoside-triphosphatase (NTPase) involved in mitochondrial trafficking. Probably involved in control of anterograde transport of mitochondria and their subcellular distribution. Can hydrolyze GTP, ATP and UTP. The protein is Mitochondrial Rho GTPase 1 (RHOT1) of Gallus gallus (Chicken).